Consider the following 388-residue polypeptide: Processive diacylglycerol beta-glucosyltransferase (388 aa).

It belongs to the glycosyltransferase 28 family. UgtP subfamily.

The protein localises to the cell membrane. It catalyses the reaction a 1,2-diacyl-3-O-(beta-D-glucopyranosyl)-sn-glycerol + UDP-alpha-D-glucose = a 1,2-diacyl-3-O-(beta-D-Glc-(1-&gt;6)-beta-D-Glc)-sn-glycerol + UDP + H(+). The enzyme catalyses a 1,2-diacyl-3-O-(beta-D-Glc-(1-&gt;6)-beta-D-Glc)-sn-glycerol + UDP-alpha-D-glucose = a 1,2-diacyl-3-O-(beta-D-Glc-(1-&gt;6)-beta-D-Glc-(1-&gt;6)-beta-D-Glc)-sn-glycerol + UDP + H(+). The catalysed reaction is a 1,2-diacyl-sn-glycerol + UDP-alpha-D-glucose = a 1,2-diacyl-3-O-(beta-D-glucopyranosyl)-sn-glycerol + UDP + H(+). It functions in the pathway glycolipid metabolism; diglucosyl-diacylglycerol biosynthesis. In terms of biological role, processive glucosyltransferase involved in the biosynthesis of both the bilayer- and non-bilayer-forming membrane glucolipids. Is able to successively transfer up to three glucosyl residues to diacylglycerol (DAG), thereby catalyzing the formation of beta-monoglucosyl-DAG (3-O-(beta-D-glucopyranosyl)-1,2-diacyl-sn-glycerol), beta-diglucosyl-DAG (3-O-(beta-D-glucopyranosyl-beta-(1-&gt;6)-D-glucopyranosyl)-1,2-diacyl-sn-glycerol) and beta-triglucosyl-DAG (3-O-(beta-D-glucopyranosyl-beta-(1-&gt;6)-D-glucopyranosyl-beta-(1-&gt;6)-D-glucopyranosyl)-1,2-diacyl-sn-glycerol). Beta-diglucosyl-DAG is the predominant glycolipid found in Bacillales and is also used as a membrane anchor for lipoteichoic acid (LTA). The chain is Processive diacylglycerol beta-glucosyltransferase from Bacillus cereus (strain ZK / E33L).